An 808-amino-acid polypeptide reads, in one-letter code: Copal-8-ol diphosphate hydratase, chloroplastic (808 aa).

A chloroplast-targeting transit peptide spans 1–50 (MAFTFTSAHLFLPVTENHSVHVNYSIPPGNWRLWSTAKGGSNKLDIRRLR). Positions 190–219 (DKCQKGLKFFRDNISKLEKENVEASAQMLS) form a coiled coil. Lys-256 is a substrate binding site. 2 residues coordinate Mg(2+): Asp-391 and Asp-393. The short motif at 391–394 (DLDD) is the DXDD motif element. Lys-477 contacts substrate.

Belongs to the terpene synthase family. Mg(2+) serves as cofactor. Expressed in stems, leaves and trichomes. Not detected in roots and seeds. Higher expression in young leaves than in fully expanded leaves.

Its subcellular location is the plastid. The protein localises to the chloroplast. It carries out the reaction (2E,6E,10E)-geranylgeranyl diphosphate + H2O = 8-hydroxycopalyl diphosphate. It functions in the pathway secondary metabolite biosynthesis; terpenoid biosynthesis. In terms of biological role, involved in the biosynthesis of oxygen-containing labdane-type diterpenes that may be implicated in direct and indirect defense mechanisms. No activity with geranyl diphosphate or farnesyl diphosphate as substrate. The polypeptide is Copal-8-ol diphosphate hydratase, chloroplastic (Cistus creticus subsp. creticus (Rock rose)).